Here is a 560-residue protein sequence, read N- to C-terminus: Protein DA1-related 7 (560 aa).

3 consecutive UIM domains span residues 43–62 (SEAD…QETS), 92–111 (EEDQ…KGKS), and 155–174 (NEDA…KGQI). The 71-residue stretch at 199–269 (SICDGCKSAI…HVCKKKFPGR (71 aa)) folds into the LIM zinc-binding domain.

Interacts with ubiquitin.

In terms of biological role, ubiquitin receptor that probably regulates developmental process. The chain is Protein DA1-related 7 (DAR7) from Arabidopsis thaliana (Mouse-ear cress).